The chain runs to 286 residues: MTKVITTINEMQSIVKQHQREGKTIGFVPTMGALHDGHLTMMKQSVSENDLTVISIFVNPLQFGPNEDFDAYPRQLDDDVAAVKKLQVDYVFHPSVDEMYPEELGIHLKVGHLAQVLEGAQRPGHFEGVVTVVNKLFNIVQPDYAYFGKKDAQQLAIVEKMVKDFNLPVHVIGIDIVREKDGLAKSSRNIYLTSEERKEAKHLYQSLRLAKNLYEAGERDSNEIIGQIAAYLNKNISGHIDDLGIYSYPNLIQQSKIHGRIFISLAVKFSKARLIDNIIIGDDYID.

An ATP-binding site is contributed by 31 to 38; it reads MGALHDGH. Histidine 38 functions as the Proton donor in the catalytic mechanism. Residue glutamine 62 participates in (R)-pantoate binding. A beta-alanine-binding site is contributed by glutamine 62. Residue 148–151 coordinates ATP; the sequence is GKKD. Glutamine 154 provides a ligand contact to (R)-pantoate. Residues valine 177 and 185-188 each bind ATP; that span reads KSSR.

The protein belongs to the pantothenate synthetase family. In terms of assembly, homodimer.

The protein localises to the cytoplasm. The enzyme catalyses (R)-pantoate + beta-alanine + ATP = (R)-pantothenate + AMP + diphosphate + H(+). Its pathway is cofactor biosynthesis; (R)-pantothenate biosynthesis; (R)-pantothenate from (R)-pantoate and beta-alanine: step 1/1. Its function is as follows. Catalyzes the condensation of pantoate with beta-alanine in an ATP-dependent reaction via a pantoyl-adenylate intermediate. The sequence is that of Pantothenate synthetase from Staphylococcus epidermidis (strain ATCC 35984 / DSM 28319 / BCRC 17069 / CCUG 31568 / BM 3577 / RP62A).